The chain runs to 93 residues: Neurophysin 1 (93 aa).

Disulfide bonds link cysteine 10-cysteine 54, cysteine 13-cysteine 27, cysteine 21-cysteine 44, cysteine 28-cysteine 34, cysteine 61-cysteine 74, cysteine 68-cysteine 86, and cysteine 75-cysteine 80.

The protein belongs to the vasopressin/oxytocin family.

Its subcellular location is the secreted. Its function is as follows. Neurophysin 1 specifically binds oxytocin. This is Neurophysin 1 from Anser anser anser (Western greylag goose).